Here is a 1505-residue protein sequence, read N- to C-terminus: MPHFPNLPLPEAAAAAAHAALLALALLLLLLRSARALASRCASCLKTAPRRAAAVDGGLAAASSVGAWYRAALACCGYALLAQVAALSYEVAVAGSHVAVEALLLPAVQALAWAALLALAMQARAVGWGRFPVLVRVWWVVSFVLCVGIAYDDTRHLMGDDDDDEVDYAHMVANFASAPALGFLCLVGVMGSTGVELEFTDDDSSVHEPLLLGGQRRDADEEPGCLRVTPYGDAGIVSLATLSWLSPLLSVGAQRPLELADIPLMAHKDRAKSCYKAMSSHYERQRMERPGSEPSLAWAILKSFWREAAINGAFAAVNTIVSYVGPYLISYFVDYLSGKIEFPHEGYILASVFFVAKLLETLTARQWYLGVDVMGIHVKSGLTAMVYRKGLRLSNSSRQSHTSGEIVNYMAVDVQRVGDYAWYFHDIWMLPLQIILALAILYKNVGIAMVSTLVATVLSIAASVPVAKLQEHYQDKLMASKDERMRKTSECLKNMRILKLQAWEDRYRLKLEEMRNVECKWLRWALYSQAAVTFVFWSSPIFVAVITFGTCILLGGELTAGGVLSALATFRILQEPLRNFPDLISMIAQTRVSLDRLSHFLQQEELPDDATITVPHGSTDKAININDATFSWNPSSPTPTLSGINLSVVRGMRVAVCGVIGSGKSSLLSSILGEIPKLCGQVRISGSAAYVPQTAWIQSGNIEENILFGSPMDKQRYKRVIEACSLKKDLQLLQYGDQTIIGDRGINLSGGQKQRVQLARALYQDADIYLLDDPFSAVDAHTGSELFREYILTALASKTVIYVTHQIEFLPAADLILVLKDGHITQAGKYDDLLQAGTDFNALVCAHKEAIETMEFSEDSDEDTVSSVPIKRLTPSVSNIDNLKNKVSNNEKPSSTRGIKEKKKKPEERKKKRSVQEEERERGRVSLQVYLSYMGEAYKGTLIPLIILAQTMFQVLQIASNWWMAWANPQTEGDAPKTDSVVLLVVYMSLAFGSSLFVFVRSLLVATFGLATAQKLFVKMLRCVFRAPMSFFDTTPSGRILNRVSVDQSVVDLDIAFRLGGFASTTIQLLGIVAVMSKVTWQVLILIVPMAVACMWMQRYYIASSRELTRILSVQKSPVIHLFSESIAGAATIRGFGQEKRFMKRNLYLLDCFARPLFSSLAAIEWLCLRMELLSTFVFAFCMAILVSFPPGTIEPSMAGLAVTYGLNLNARMSRWILSFCKLENRIISVERIYQYCKLPSEAPLIIENSRPSSSWPENGNIELVDLKVRYKDDLPLVLHGISCIFPGGKKIGIVGRTGSGKSTLIQALFRLIEPTGGKVIIDDVDISRIGLHDLRSRLSIIPQDPTLFEGTIRMNLDPLEECTDQEIWEALEKCQLGEVIRSKDEKLDSPVLENGDNWSVGQRQLIALGRALLKQAKILVLDEATASVDTATDNLIQKIIRSEFKDCTVCTIAHRIPTVIDSDLVLVLSDGKIAEFDTPQRLLEDKSSMFMQLVSEYSTRSSCI.

The next 12 membrane-spanning stretches (helical) occupy residues 11 to 31 (EAAA…LLLL), 54 to 68 (AVDG…VGAW), 71 to 91 (AALA…SYEV), 102 to 122 (ALLL…LAMQ), 131 to 151 (FPVL…GIAY), 171 to 191 (MVAN…GVMG), 313 to 333 (AFAA…SYFV), 336 to 356 (LSGK…FFVA), 367 to 387 (WYLG…AMVY), 421 to 441 (AWYF…LAIL), 447 to 467 (IAMV…VPVA), and 534 to 554 (FVFW…CILL). The region spanning 314–589 (FAAVNTIVSY…FPDLISMIAQ (276 aa)) is the ABC transmembrane type-1 1 domain. The ABC transporter 1 domain maps to 623–846 (ININDATFSW…GTDFNALVCA (224 aa)). An ATP-binding site is contributed by 658–665 (GVIGSGKS). Residues 881 to 897 (DNLKNKVSNNEKPSSTR) are compositionally biased toward polar residues. The disordered stretch occupies residues 881–919 (DNLKNKVSNNEKPSSTRGIKEKKKKPEERKKKRSVQEEE). The segment covering 904-919 (KKPEERKKKRSVQEEE) has biased composition (basic and acidic residues). The next 6 membrane-spanning stretches (helical) occupy residues 940 to 960 (GTLI…QIAS), 980 to 1000 (SVVL…FVFV), 1055 to 1077 (IAFR…AVMS), 1081 to 1103 (WQVL…YYIA), 1149 to 1169 (LLDC…WLCL), and 1174 to 1194 (LSTF…PGTI). Residues 945-1215 (LIILAQTMFQ…GLNLNARMSR (271 aa)) enclose the ABC transmembrane type-1 2 domain. In terms of domain architecture, ABC transporter 2 spans 1262–1496 (IELVDLKVRY…KSSMFMQLVS (235 aa)). 1296-1303 (GRTGSGKS) is a binding site for ATP.

It belongs to the ABC transporter superfamily. ABCC family. Conjugate transporter (TC 3.A.1.208) subfamily.

The protein resides in the membrane. Functionally, ABC transporter that may affect phytic acid transport and compartmentalization. May function directly or indirectly in removing phytic acid from the cytosol or in vesicle trafficking. Required for phytic acid accumulation in developing seeds. Phytic acid is the primary storage form of phosphorus in cereal grains and other plant seeds. This Oryza sativa subsp. indica (Rice) protein is ABC transporter C family member 13.